Consider the following 456-residue polypeptide: Bifunctional protein GlmU (456 aa).

Positions 1 to 229 (MLNNAMSVVI…LSEVEGVNNR (229 aa)) are pyrophosphorylase. UDP-N-acetyl-alpha-D-glucosamine-binding positions include 11 to 14 (LAAG), Lys25, Gln76, 81 to 82 (GT), 103 to 105 (YGD), Gly140, Glu154, Asn169, and Asn227. Position 105 (Asp105) interacts with Mg(2+). Asn227 contacts Mg(2+). The linker stretch occupies residues 230–250 (LQLSRLERVYQSEQAEKLLLA). The tract at residues 251 to 456 (GVMLRDPARF…EGWRRPVKKK (206 aa)) is N-acetyltransferase. Residues Arg333 and Lys351 each contribute to the UDP-N-acetyl-alpha-D-glucosamine site. His363 acts as the Proton acceptor in catalysis. 2 residues coordinate UDP-N-acetyl-alpha-D-glucosamine: Tyr366 and Asn377. Residues Ala380, 386–387 (NY), Ser405, Ala423, and Arg440 contribute to the acetyl-CoA site.

The protein in the N-terminal section; belongs to the N-acetylglucosamine-1-phosphate uridyltransferase family. It in the C-terminal section; belongs to the transferase hexapeptide repeat family. Homotrimer. Mg(2+) is required as a cofactor.

The protein resides in the cytoplasm. The catalysed reaction is alpha-D-glucosamine 1-phosphate + acetyl-CoA = N-acetyl-alpha-D-glucosamine 1-phosphate + CoA + H(+). It carries out the reaction N-acetyl-alpha-D-glucosamine 1-phosphate + UTP + H(+) = UDP-N-acetyl-alpha-D-glucosamine + diphosphate. The protein operates within nucleotide-sugar biosynthesis; UDP-N-acetyl-alpha-D-glucosamine biosynthesis; N-acetyl-alpha-D-glucosamine 1-phosphate from alpha-D-glucosamine 6-phosphate (route II): step 2/2. It functions in the pathway nucleotide-sugar biosynthesis; UDP-N-acetyl-alpha-D-glucosamine biosynthesis; UDP-N-acetyl-alpha-D-glucosamine from N-acetyl-alpha-D-glucosamine 1-phosphate: step 1/1. Its pathway is bacterial outer membrane biogenesis; LPS lipid A biosynthesis. Catalyzes the last two sequential reactions in the de novo biosynthetic pathway for UDP-N-acetylglucosamine (UDP-GlcNAc). The C-terminal domain catalyzes the transfer of acetyl group from acetyl coenzyme A to glucosamine-1-phosphate (GlcN-1-P) to produce N-acetylglucosamine-1-phosphate (GlcNAc-1-P), which is converted into UDP-GlcNAc by the transfer of uridine 5-monophosphate (from uridine 5-triphosphate), a reaction catalyzed by the N-terminal domain. The protein is Bifunctional protein GlmU of Shigella flexneri serotype 5b (strain 8401).